Here is a 340-residue protein sequence, read N- to C-terminus: Tartrate-resistant acid phosphatase type 5 (340 aa).

An N-terminal signal peptide occupies residues 1 to 20; it reads MDTWTVLLILQASLVLPGAV. Residues Asp41, Asp79, Tyr82, and Asn118 each coordinate Fe cation. Asn124 and Asn155 each carry an N-linked (GlcNAc...) asparagine glycan. An intrachain disulfide couples Cys169 to Cys227. Positions 213, 248, and 250 each coordinate Fe cation.

Fe cation serves as cofactor.

The protein localises to the secreted. The enzyme catalyses a phosphate monoester + H2O = an alcohol + phosphate. In terms of biological role, uteroferrin is a phosphoprotein phosphatase, synthesized in response to progesterone. It appears to function in transplacental transport of iron in pig. The chain is Tartrate-resistant acid phosphatase type 5 (ACP5) from Sus scrofa (Pig).